Here is a 277-residue protein sequence, read N- to C-terminus: 5'-nucleotidase SurE (277 aa).

The a divalent metal cation site is built by Asp16, Asp17, Ser48, and Asn101.

Belongs to the SurE nucleotidase family. The cofactor is a divalent metal cation.

The protein localises to the cytoplasm. It catalyses the reaction a ribonucleoside 5'-phosphate + H2O = a ribonucleoside + phosphate. Nucleotidase that shows phosphatase activity on nucleoside 5'-monophosphates. This Parvibaculum lavamentivorans (strain DS-1 / DSM 13023 / NCIMB 13966) protein is 5'-nucleotidase SurE.